The primary structure comprises 328 residues: Tetraacyldisaccharide 4'-kinase (328 aa).

Position 55-62 (55-62 (TVGGNGKT)) interacts with ATP.

This sequence belongs to the LpxK family.

It carries out the reaction a lipid A disaccharide + ATP = a lipid IVA + ADP + H(+). The protein operates within glycolipid biosynthesis; lipid IV(A) biosynthesis; lipid IV(A) from (3R)-3-hydroxytetradecanoyl-[acyl-carrier-protein] and UDP-N-acetyl-alpha-D-glucosamine: step 6/6. Functionally, transfers the gamma-phosphate of ATP to the 4'-position of a tetraacyldisaccharide 1-phosphate intermediate (termed DS-1-P) to form tetraacyldisaccharide 1,4'-bis-phosphate (lipid IVA). In Hamiltonella defensa subsp. Acyrthosiphon pisum (strain 5AT), this protein is Tetraacyldisaccharide 4'-kinase.